We begin with the raw amino-acid sequence, 171 residues long: Nicotinamide-nucleotide adenylyltransferase (171 aa).

It belongs to the archaeal NMN adenylyltransferase family.

The protein localises to the cytoplasm. The catalysed reaction is beta-nicotinamide D-ribonucleotide + ATP + H(+) = diphosphate + NAD(+). It participates in cofactor biosynthesis; NAD(+) biosynthesis; NAD(+) from nicotinamide D-ribonucleotide: step 1/1. The sequence is that of Nicotinamide-nucleotide adenylyltransferase from Methanococcus maripaludis (strain DSM 14266 / JCM 13030 / NBRC 101832 / S2 / LL).